The primary structure comprises 65 residues: Metallothionein-3 (65 aa).

Met-1 carries the N-acetylmethionine modification. The tract at residues 1–30 (MDPEACPCPTGGSCTCSDSCKCEGCTCASS) is beta. Positions 6, 8, 14, 16, 20, 22, 25, and 27 each coordinate a divalent metal cation. Residues 31–65 (KKSCCPAECEKCAKDCVCKGGEGAEAEEKKCGCCQ) are alpha. Ser-33 is subject to Phosphoserine. A divalent metal cation contacts are provided by Cys-34, Cys-35, Cys-39, Cys-42, Cys-46, Cys-48, Cys-61, Cys-63, and Cys-64.

This sequence belongs to the metallothionein superfamily. Type 1 family.

Binds heavy metals. Contains five zinc and one copper atoms per polypeptide chain and only a negligible amount of cadmium. The chain is Metallothionein-3 (MT3) from Ovis aries (Sheep).